A 498-amino-acid polypeptide reads, in one-letter code: Probable cytosol aminopeptidase (498 aa).

Lys264 and Asp269 together coordinate Mn(2+). The active site involves Lys276. Mn(2+) is bound by residues Asp287, Asp346, and Glu348. Residue Arg350 is part of the active site.

The protein belongs to the peptidase M17 family. Mn(2+) serves as cofactor.

It localises to the cytoplasm. It catalyses the reaction Release of an N-terminal amino acid, Xaa-|-Yaa-, in which Xaa is preferably Leu, but may be other amino acids including Pro although not Arg or Lys, and Yaa may be Pro. Amino acid amides and methyl esters are also readily hydrolyzed, but rates on arylamides are exceedingly low.. The enzyme catalyses Release of an N-terminal amino acid, preferentially leucine, but not glutamic or aspartic acids.. Functionally, presumably involved in the processing and regular turnover of intracellular proteins. Catalyzes the removal of unsubstituted N-terminal amino acids from various peptides. The polypeptide is Probable cytosol aminopeptidase (Rhizobium rhizogenes (strain K84 / ATCC BAA-868) (Agrobacterium radiobacter)).